The following is a 102-amino-acid chain: Small ribosomal subunit protein uS10 (102 aa).

Belongs to the universal ribosomal protein uS10 family. In terms of assembly, part of the 30S ribosomal subunit.

Functionally, involved in the binding of tRNA to the ribosomes. This chain is Small ribosomal subunit protein uS10, found in Streptococcus mutans serotype c (strain ATCC 700610 / UA159).